An 863-amino-acid polypeptide reads, in one-letter code: Chloride channel protein A (863 aa).

The Cytoplasmic segment spans residues 1 to 124 (MFRNNNNDNN…TSKLNHMLKT (124 aa)). The tract at residues 48–78 (ENGLINNNNNSHNNNNGGNNNNHGPSKVTHR) is disordered. Over residues 49–71 (NGLINNNNNSHNNNNGGNNNNHG) the composition is skewed to low complexity. 7 helical membrane passes run 125-145 (FGKW…AYLV), 171-191 (IAFL…SLVI), 228-248 (LVSL…GPMI), 289-309 (GAAA…LFGF), 324-344 (TFFA…GFDM), 367-387 (LIPF…FVNL), and 408-428 (VLEV…CAAF). Positions 434–460 (KTQANGSQTNSLDTSSSSILSSSGDNS) are disordered. The segment covering 439 to 460 (GSQTNSLDTSSSSILSSSGDNS) has biased composition (low complexity). 3 helical membrane passes run 518–538 (IFTI…TTIT), 539–559 (SGLM…ATFG), and 561–581 (LVGQ…ALVG). 2 CBS domains span residues 661 to 742 (MKTE…CHEQ) and 816 to 863 (MNLS…KDLL).

This sequence belongs to the chloride channel (TC 2.A.49) family.

It is found in the membrane. Functionally, voltage-gated chloride channel. Chloride channels may have several functions including the regulation of cell volume, membrane potential stabilization and signal transduction. This is Chloride channel protein A (clcA) from Dictyostelium discoideum (Social amoeba).